The primary structure comprises 231 residues: NADH-ubiquinone oxidoreductase chain 4 (231 aa).

Helical transmembrane passes span 1-21 (PIAGSMVLAAILLKLGGYGII), 34-54 (MFLPFVVLALWGAILANLTCL), 63-85 (IAYSSISHMGLVVAAIIIQTPWG), 89-111 (AMALMIAHGFTSSALFCLANTTY), 128-148 (ILPMATTWWLLTNLMNIAVPP), and 156-176 (LLIMSALFNWCPTTIIMLGLS).

This sequence belongs to the complex I subunit 4 family.

Its subcellular location is the mitochondrion membrane. It carries out the reaction a ubiquinone + NADH + 5 H(+)(in) = a ubiquinol + NAD(+) + 4 H(+)(out). Functionally, core subunit of the mitochondrial membrane respiratory chain NADH dehydrogenase (Complex I) that is believed to belong to the minimal assembly required for catalysis. Complex I functions in the transfer of electrons from NADH to the respiratory chain. The immediate electron acceptor for the enzyme is believed to be ubiquinone. This is NADH-ubiquinone oxidoreductase chain 4 (MT-ND4) from Agkistrodon contortrix contortrix (Southern copperhead).